The following is a 368-amino-acid chain: Zinc finger protein 24 (368 aa).

K22 is covalently cross-linked (Glycyl lysine isopeptide (Lys-Gly) (interchain with G-Cter in SUMO2)). K27 is covalently cross-linked (Glycyl lysine isopeptide (Lys-Gly) (interchain with G-Cter in SUMO1); alternate). Residue K27 forms a Glycyl lysine isopeptide (Lys-Gly) (interchain with G-Cter in SUMO2); alternate linkage. Residues 52 to 134 (RQRFRQFGYQ…TVLEDLESEL (83 aa)) form the SCAN box domain. Residues S132 and S142 each carry the phosphoserine modification. Residues K147, K177, and K236 each participate in a glycyl lysine isopeptide (Lys-Gly) (interchain with G-Cter in SUMO2) cross-link. The C2H2-type 1 zinc-finger motif lies at 251 to 273 (HICDECGKHFSQGSALILHQRIH). Positions 251 to 301 (HICDECGKHFSQGSALILHQRIHSGEKPYGCVECGKAFSRSSILVQHQRVH) are necessary and sufficient for nuclear localization. Residue S274 is modified to Phosphoserine. Glycyl lysine isopeptide (Lys-Gly) (interchain with G-Cter in SUMO2) cross-links involve residues K277 and K286. 3 consecutive C2H2-type zinc fingers follow at residues 279 to 301 (YGCV…QRVH), 307 to 329 (YKCL…QRIH), and 335 to 357 (YECV…XXXH). S292 is modified (phosphoserine). Phosphotyrosine is present on Y335. Residues K361 and K367 each participate in a glycyl lysine isopeptide (Lys-Gly) (interchain with G-Cter in SUMO2) cross-link.

This sequence belongs to the krueppel C2H2-type zinc-finger protein family. Sumoylated.

The protein resides in the nucleus. Functionally, transcription factor required for myelination of differentiated oligodendrocytes. Required for the conversion of oligodendrocytes from the premyelinating to the myelinating state. In the developing central nervous system (CNS), involved in the maintenance in the progenitor stage by promoting the cell cycle. Specifically binds to the 5'-TCAT-3' DNA sequence. Has transcription repressor activity in vitro. This is Zinc finger protein 24 (ZNF24) from Pan paniscus (Pygmy chimpanzee).